The following is an 82-amino-acid chain: Cytochrome b559 subunit alpha (82 aa).

A helical membrane pass occupies residues 21 to 35 (VIHSVTIPSLFIAGW). His-23 is a binding site for heme.

This sequence belongs to the PsbE/PsbF family. In terms of assembly, heterodimer of an alpha subunit and a beta subunit. PSII is composed of 1 copy each of membrane proteins PsbA, PsbB, PsbC, PsbD, PsbE, PsbF, PsbH, PsbI, PsbJ, PsbK, PsbL, PsbM, PsbT, PsbX, PsbY, PsbZ, Psb30/Ycf12, at least 3 peripheral proteins of the oxygen-evolving complex and a large number of cofactors. It forms dimeric complexes. Requires heme b as cofactor.

Its subcellular location is the plastid. The protein resides in the chloroplast thylakoid membrane. Its function is as follows. This b-type cytochrome is tightly associated with the reaction center of photosystem II (PSII). PSII is a light-driven water:plastoquinone oxidoreductase that uses light energy to abstract electrons from H(2)O, generating O(2) and a proton gradient subsequently used for ATP formation. It consists of a core antenna complex that captures photons, and an electron transfer chain that converts photonic excitation into a charge separation. In Ostreococcus tauri, this protein is Cytochrome b559 subunit alpha.